The primary structure comprises 571 residues: Proline--tRNA ligase (571 aa).

Belongs to the class-II aminoacyl-tRNA synthetase family. ProS type 1 subfamily. Homodimer.

It is found in the cytoplasm. It carries out the reaction tRNA(Pro) + L-proline + ATP = L-prolyl-tRNA(Pro) + AMP + diphosphate. Functionally, catalyzes the attachment of proline to tRNA(Pro) in a two-step reaction: proline is first activated by ATP to form Pro-AMP and then transferred to the acceptor end of tRNA(Pro). As ProRS can inadvertently accommodate and process non-cognate amino acids such as alanine and cysteine, to avoid such errors it has two additional distinct editing activities against alanine. One activity is designated as 'pretransfer' editing and involves the tRNA(Pro)-independent hydrolysis of activated Ala-AMP. The other activity is designated 'posttransfer' editing and involves deacylation of mischarged Ala-tRNA(Pro). The misacylated Cys-tRNA(Pro) is not edited by ProRS. The sequence is that of Proline--tRNA ligase from Shewanella baltica (strain OS155 / ATCC BAA-1091).